A 457-amino-acid polypeptide reads, in one-letter code: UDP-N-acetylmuramoylalanine--D-glutamate ligase (457 aa).

117 to 123 (GTNGKST) lines the ATP pocket.

The protein belongs to the MurCDEF family.

The protein resides in the cytoplasm. It catalyses the reaction UDP-N-acetyl-alpha-D-muramoyl-L-alanine + D-glutamate + ATP = UDP-N-acetyl-alpha-D-muramoyl-L-alanyl-D-glutamate + ADP + phosphate + H(+). It participates in cell wall biogenesis; peptidoglycan biosynthesis. Its function is as follows. Cell wall formation. Catalyzes the addition of glutamate to the nucleotide precursor UDP-N-acetylmuramoyl-L-alanine (UMA). The sequence is that of UDP-N-acetylmuramoylalanine--D-glutamate ligase from Paramagnetospirillum magneticum (strain ATCC 700264 / AMB-1) (Magnetospirillum magneticum).